The primary structure comprises 81 residues: Short neurotoxin B (81 aa).

An N-terminal signal peptide occupies residues 1-21; sequence MKTLLLTLVVVTIVCLDLGYT. 4 disulfide bridges follow: C24–C43, C38–C60, C62–C73, and C74–C79.

The protein belongs to the three-finger toxin family. Short-chain subfamily. Type I alpha-neurotoxin sub-subfamily. Expressed by the venom gland.

The protein localises to the secreted. Functionally, binds to muscle nicotinic acetylcholine receptor (nAChR) and inhibit acetylcholine from binding to the receptor, thereby impairing neuromuscular transmission. The chain is Short neurotoxin B from Aipysurus laevis (Olive sea snake).